The following is a 125-amino-acid chain: PEP-dependent dihydroxyacetone kinase 2, phosphoryl donor subunit DhaM (125 aa).

One can recognise a PTS EIIA type-4 domain in the interval 1 to 125; it reads MISIVLVSHS…AILQELTNVH (125 aa). The active-site Tele-phosphohistidine intermediate is the H9.

The protein belongs to the PEP-utilizing enzyme family. Homodimer. The dihydroxyacetone kinase complex is composed of a homodimer of DhaM, a homodimer of DhaK and the subunit DhaL.

The protein localises to the cytoplasm. The catalysed reaction is dihydroxyacetone + phosphoenolpyruvate = dihydroxyacetone phosphate + pyruvate. Functionally, component of the dihydroxyacetone kinase complex, which is responsible for the phosphoenolpyruvate (PEP)-dependent phosphorylation of dihydroxyacetone. DhaM serves as the phosphoryl donor. Is phosphorylated by phosphoenolpyruvate in an EI- and HPr-dependent reaction, and a phosphorelay system on histidine residues finally leads to phosphoryl transfer to DhaL and dihydroxyacetone. The polypeptide is PEP-dependent dihydroxyacetone kinase 2, phosphoryl donor subunit DhaM (Listeria innocua serovar 6a (strain ATCC BAA-680 / CLIP 11262)).